The following is a 445-amino-acid chain: SVP1-like protein 2 (445 aa).

WD repeat units lie at residues 218–258 and 263–302; these read AHKA…LLKE and LDRA…EGTL. The tract at residues 301–321 is disordered; that stretch reads TLNPANPEDHQSSGSNGHIKA. The segment covering 312-321 has biased composition (polar residues); the sequence is SSGSNGHIKA.

The protein belongs to the WD repeat PROPPIN family.

Its subcellular location is the vacuole membrane. The protein resides in the cytoplasmic vesicle membrane. Involved in mitochondrial or peroxisomal functions and amino acid signaling pathways. In Candida glabrata (strain ATCC 2001 / BCRC 20586 / JCM 3761 / NBRC 0622 / NRRL Y-65 / CBS 138) (Yeast), this protein is SVP1-like protein 2 (HSV2).